Consider the following 397-residue polypeptide: Calponin-like protein clik-2 (397 aa).

Calponin-like repeat units follow at residues 29 to 54, 73 to 98, 119 to 144, 161 to 189, 209 to 234, and 255 to 280; these read LSQQAGTNKFETQKGMTAVGMPRWNI, LRVQCGTNQYASQKGETPIGASRFQV, IPKQAGDYGLASQAGEVSMGGHRNQV, LCFQNGTNLFASQTGMSAPPGLGAVRQAT, TPWYSGQNKFATQAGSGGFLKVRDVL, and VPLQSGTNKLASQRGMTGFGTPRNTQ. A disordered region spans residues 301–397; it reads EETKPPGSAS…EEEEEEEEDE (97 aa). Over residues 321–332 the composition is skewed to basic and acidic residues; sequence KFEERESSRQSE. Acidic residues-rich tracts occupy residues 344–360 and 367–397; these read VEPEPEEEEEEEEEEKI and EEEEEEEEEEEEEEEELEEEEEEEEEEEEDE.

Belongs to the calponin family. As to expression, expressed in pharyngeal muscle cells (at protein level).

Its function is as follows. Required for pharyngeal pumping. This chain is Calponin-like protein clik-2, found in Caenorhabditis elegans.